The chain runs to 337 residues: Sideroflexin-4 (337 aa).

S2 is subject to N-acetylserine. The next 3 membrane-spanning stretches (helical) occupy residues 111–131 (AAFL…LKGI), 133–153 (SVIL…SING), and 165–185 (SLLM…PQFV). K197 is subject to N6-acetyllysine. 2 helical membrane passes run 251-271 (ASRI…TYFF) and 293-313 (VLAM…IGQI).

Belongs to the sideroflexin family.

The protein localises to the mitochondrion inner membrane. Its function is as follows. Mitochondrial amino-acid transporter. Does not act as a serine transporter: not able to mediate transport of serine into mitochondria. The protein is Sideroflexin-4 of Homo sapiens (Human).